A 106-amino-acid chain; its full sequence is U1-lycotoxin-Ls1z (106 aa).

Residues 1-19 (MKVLVVVALLVTLISYSSS) form the signal peptide. The propeptide occupies 20-40 (EGIDDLEADELLSLMANEQTR). Disulfide bonds link C43/C58, C50/C67, C57/C85, and C69/C83.

It belongs to the neurotoxin 19 (CSTX) family. 03 subfamily. As to expression, expressed by the venom gland.

Its subcellular location is the secreted. This chain is U1-lycotoxin-Ls1z, found in Lycosa singoriensis (Wolf spider).